Here is a 145-residue protein sequence, read N- to C-terminus: Class I hydrophobin 1 (145 aa).

Residues 1–19 (MKFSYAIAAVVAAAASVQA) form the signal peptide. 4 cysteine pairs are disulfide-bonded: cysteine 65/cysteine 126, cysteine 72/cysteine 120, cysteine 73/cysteine 106, and cysteine 127/cysteine 140. N-linked (GlcNAc...) asparagine glycosylation is found at asparagine 80 and asparagine 129.

This sequence belongs to the fungal hydrophobin family. Self-assembles to form functional amyloid fibrils called rodlets. Self-assembly into fibrillar rodlets occurs spontaneously at hydrophobic:hydrophilic interfaces and the rodlets further associate laterally to form amphipathic monolayers.

It localises to the secreted. The protein localises to the cell wall. Functionally, aerial growth, conidiation, and dispersal of filamentous fungi in the environment rely upon a capability of their secreting small amphipathic proteins called hydrophobins (HPBs) with low sequence identity. Class I can self-assemble into an outermost layer of rodlet bundles on aerial cell surfaces, conferring cellular hydrophobicity that supports fungal growth, development and dispersal; whereas Class II form highly ordered films at water-air interfaces through intermolecular interactions but contribute nothing to the rodlet structure. Hyd1 is a class I hydrophobin that is crucial for the initiation of primordia formation. Plays also important roles in nitrogen regulation and resistance to abiotic stresses. The sequence is that of Class I hydrophobin 1 from Ganoderma lucidum (Ling zhi medicinal fungus).